The chain runs to 239 residues: Type II restriction enzyme Eco47II (239 aa).

The catalysed reaction is Endonucleolytic cleavage of DNA to give specific double-stranded fragments with terminal 5'-phosphates.. Functionally, a P subtype restriction enzyme that recognizes the double-stranded sequence 5'-GGNCC-3'; the cleavage site is unknown. This is Type II restriction enzyme Eco47II from Escherichia coli.